The sequence spans 378 residues: Glutamate 5-kinase (378 aa).

K20 lines the ATP pocket. 3 residues coordinate substrate: S60, D147, and N159. ATP-binding positions include 179-180 (TD) and 221-227 (TGGMLTK). The PUA domain maps to 286-364 (RGRVVLDDGA…SQIARILGSM (79 aa)).

Belongs to the glutamate 5-kinase family.

It is found in the cytoplasm. It carries out the reaction L-glutamate + ATP = L-glutamyl 5-phosphate + ADP. The protein operates within amino-acid biosynthesis; L-proline biosynthesis; L-glutamate 5-semialdehyde from L-glutamate: step 1/2. Its function is as follows. Catalyzes the transfer of a phosphate group to glutamate to form L-glutamate 5-phosphate. The polypeptide is Glutamate 5-kinase (Bordetella parapertussis (strain 12822 / ATCC BAA-587 / NCTC 13253)).